The chain runs to 485 residues: Glutamate--tRNA ligase 1 (485 aa).

The 'HIGH' region motif lies at 10–20 (PSPTGAIHIGN). Residues 252 to 256 (KLSKR) carry the 'KMSKS' region motif. Lysine 255 is a binding site for ATP.

The protein belongs to the class-I aminoacyl-tRNA synthetase family. Glutamate--tRNA ligase type 1 subfamily. Monomer.

It localises to the cytoplasm. It carries out the reaction tRNA(Glu) + L-glutamate + ATP = L-glutamyl-tRNA(Glu) + AMP + diphosphate. Functionally, catalyzes the attachment of glutamate to tRNA(Glu) in a two-step reaction: glutamate is first activated by ATP to form Glu-AMP and then transferred to the acceptor end of tRNA(Glu). The protein is Glutamate--tRNA ligase 1 of Thermoanaerobacter pseudethanolicus (strain ATCC 33223 / 39E) (Clostridium thermohydrosulfuricum).